Consider the following 510-residue polypeptide: MIWHVQNENFILDSTRIFMKAFHLLLFDGSLIFPECILIFGLILLLMIDSTSDQKDIPWLYFISSTSLVMSITALLFRWREEPMISFSGNFQTNNFNEIFQFLILLCSTLCIPLSVEYIECTEMAITEFLLFVLTATLGGMFLCGANDLITIFVAPECFSLCSYLLSGYTKKDVRSNEATMKYLLMGGASSSILVHGFSWLYGSSGGEIELQEIVNGLINTQMYNSPGISIALIFITVGIGFKLSPAPSHQWTPDVYEGSPTPVVAFLSVTSKVAASASATRIFDIPFYFSSNEWHLLLEILAILSMILGNLIAITQTSMKRMLAYSSIGQIGYVIIGIIVGDSNDGYASMITYMLFYISMNLGTFACIVLFGLRTGTDNIRDYAGLYTKDPFLALSLALCLLSLGGLPPLAGFFGKLYLFWCGWQAGLYFLVLIGLLTSVVSIYYYLKIIKLLMIGRNQEITPHVRNYRRSPFRSNNSIELSMIVCVIASTIPGISMNPIIAIAQDTLF.

13 helical membrane-spanning segments follow: residues 24-44 (LLLF…GLIL), 57-77 (IPWL…ALLF), 99-119 (IFQF…VEYI), 124-144 (MAIT…MFLC), 149-169 (LITI…LSGY), 183-203 (YLLM…WLYG), 227-247 (PGIS…LSPA), 295-315 (WHLL…LIAI), 323-343 (MLAY…IVGD), 354-374 (YMLF…LFGL), 395-415 (ALSL…AGFF), 418-438 (LYLF…IGLL), and 484-504 (MIVC…IIAI).

It belongs to the complex I subunit 2 family. In terms of assembly, NDH is composed of at least 16 different subunits, 5 of which are encoded in the nucleus.

The protein resides in the plastid. It is found in the chloroplast thylakoid membrane. It catalyses the reaction a plastoquinone + NADH + (n+1) H(+)(in) = a plastoquinol + NAD(+) + n H(+)(out). The catalysed reaction is a plastoquinone + NADPH + (n+1) H(+)(in) = a plastoquinol + NADP(+) + n H(+)(out). Its function is as follows. NDH shuttles electrons from NAD(P)H:plastoquinone, via FMN and iron-sulfur (Fe-S) centers, to quinones in the photosynthetic chain and possibly in a chloroplast respiratory chain. The immediate electron acceptor for the enzyme in this species is believed to be plastoquinone. Couples the redox reaction to proton translocation, and thus conserves the redox energy in a proton gradient. The protein is NAD(P)H-quinone oxidoreductase subunit 2 A, chloroplastic of Panax ginseng (Korean ginseng).